A 423-amino-acid polypeptide reads, in one-letter code: UDP-N-acetylglucosamine 1-carboxyvinyltransferase 1 (423 aa).

23–24 (KN) is a phosphoenolpyruvate binding site. R96 contributes to the UDP-N-acetyl-alpha-D-glucosamine binding site. Residue C120 is the Proton donor of the active site. C120 is modified (2-(S-cysteinyl)pyruvic acid O-phosphothioketal). Residues 125–129 (RPIDL), D309, and V331 contribute to the UDP-N-acetyl-alpha-D-glucosamine site.

Belongs to the EPSP synthase family. MurA subfamily.

It localises to the cytoplasm. The enzyme catalyses phosphoenolpyruvate + UDP-N-acetyl-alpha-D-glucosamine = UDP-N-acetyl-3-O-(1-carboxyvinyl)-alpha-D-glucosamine + phosphate. The protein operates within cell wall biogenesis; peptidoglycan biosynthesis. Functionally, cell wall formation. Adds enolpyruvyl to UDP-N-acetylglucosamine. This Streptococcus mutans serotype c (strain ATCC 700610 / UA159) protein is UDP-N-acetylglucosamine 1-carboxyvinyltransferase 1.